The primary structure comprises 508 residues: WD repeat-containing protein JIP5 (508 aa).

WD repeat units lie at residues 62 to 105 (EARK…WRTK), 106 to 145 (RHKGSVRALAIDHDGKHVYTIGADNVLKKADTHSGKVVKK), 149 to 188 (DGGSKVTKLVKSATHDFLVMGDEVGTIVVLDSNDLTTKNT), 193 to 233 (HGGD…MKQP), 253 to 294 (DQED…LEDQ), and 345 to 382 (SGLDEVGMLDLDFEYRLVSGGMDKLKIWEVPKEENSDS). The interval 376 to 508 (KEENSDSDSD…SHGITKFDGL (133 aa)) is disordered. Acidic residues predominate over residues 380–393 (SDSDSDSDINDDSE). The span at 407-419 (ELGSGSESEVESD) shows a compositional bias: low complexity. One copy of the WD 7 repeat lies at 431–472 (CTGSDLPGDIEGSEGENNSNDDDNHDDREELWKELDQPTSDE). The span at 441 to 454 (EGSEGENNSNDDDN) shows a compositional bias: acidic residues. The segment covering 455–466 (HDDREELWKELD) has biased composition (basic and acidic residues). Over residues 478–492 (KRSLKVKDKKNKKFK) the composition is skewed to basic residues.

Belongs to the WD repeat WDR55 family.

The protein resides in the nucleus. It localises to the nucleolus. The sequence is that of WD repeat-containing protein JIP5 (JIP5) from Candida glabrata (strain ATCC 2001 / BCRC 20586 / JCM 3761 / NBRC 0622 / NRRL Y-65 / CBS 138) (Yeast).